The chain runs to 120 residues: Putative ferric transport system permease-like protein AfuB (120 aa).

Residues M1–A38 are Cytoplasmic-facing. An ABC transmembrane type-1 domain is found at M1–F102. The chain crosses the membrane as a helical span at residues I39 to F59. Residues L60–Y81 lie on the Periplasmic side of the membrane. The chain crosses the membrane as a helical span at residues G82–F102. Topologically, residues D103–A120 are cytoplasmic.

Belongs to the binding-protein-dependent transport system permease family. FbpB subfamily.

Its subcellular location is the cell inner membrane. A severely truncated paralog of the AfuB uptake protein, homologous only to the last 20% of the intact protein in Actinobacillus. The chain is Putative ferric transport system permease-like protein AfuB (afuB) from Escherichia coli (strain K12).